Consider the following 252-residue polypeptide: MDNWLKQEIWSKTQHQDITSDDCLLLSTDWVEFLQMSQFLKQKLLQLLNCIKEKRKKAVIYPPDNKIMFWSYCCAPRDIKVVILGQDPYHGGQGTGLAFSVSYEHSIPPSLKNIFFELQRSDPLFHAPNHGCLNSWATQGVLLLNTVLTVEKGKAYSHSDLGWQWFTNYIISSVSEKLSNCVFMLWGTKAIEKSILIDSSKHLVLKAQHPSPLAAASQRVGTWPKFIGCDHFNQANKYLEEHKKKPISWALL.

Residue D87 is the Proton acceptor of the active site.

The protein belongs to the uracil-DNA glycosylase (UDG) superfamily. UNG family.

The protein localises to the host nucleus. It catalyses the reaction Hydrolyzes single-stranded DNA or mismatched double-stranded DNA and polynucleotides, releasing free uracil.. In terms of biological role, excises uracil residues from the DNA which can arise as a result of misincorporation of dUMP residues by DNA polymerase or deamination of cytosines. Therefore may reduce deleterious uracil incorporation into the viral genome, particularly in terminally differentiated cells which lack DNA repair enzymes. In Saimiri sciureus (Common squirrel monkey), this protein is Uracil-DNA glycosylase (46).